The sequence spans 950 residues: Leucine--tRNA ligase (950 aa).

Residues 72–83 (PYPSGEGLHVGH) carry the 'HIGH' region motif. A 'KMSKS' region motif is present at residues 722–726 (KIGKS). K725 is an ATP binding site.

This sequence belongs to the class-I aminoacyl-tRNA synthetase family.

The protein resides in the cytoplasm. The enzyme catalyses tRNA(Leu) + L-leucine + ATP = L-leucyl-tRNA(Leu) + AMP + diphosphate. This Mycobacterium sp. (strain JLS) protein is Leucine--tRNA ligase.